Consider the following 430-residue polypeptide: Histidinol dehydrogenase (430 aa).

NAD(+)-binding residues include tyrosine 130, glutamine 191, and asparagine 214. Residues serine 237, glutamine 259, and histidine 262 each contribute to the substrate site. Zn(2+) contacts are provided by glutamine 259 and histidine 262. Residues glutamate 327 and histidine 328 each act as proton acceptor in the active site. Positions 328, 361, 415, and 420 each coordinate substrate. Aspartate 361 contacts Zn(2+). A Zn(2+)-binding site is contributed by histidine 420.

This sequence belongs to the histidinol dehydrogenase family. Zn(2+) serves as cofactor.

The catalysed reaction is L-histidinol + 2 NAD(+) + H2O = L-histidine + 2 NADH + 3 H(+). It functions in the pathway amino-acid biosynthesis; L-histidine biosynthesis; L-histidine from 5-phospho-alpha-D-ribose 1-diphosphate: step 9/9. Functionally, catalyzes the sequential NAD-dependent oxidations of L-histidinol to L-histidinaldehyde and then to L-histidine. The polypeptide is Histidinol dehydrogenase (Brucella abortus (strain 2308)).